The following is a 434-amino-acid chain: Phosphomethylpyrimidine synthase 2 (434 aa).

Substrate contacts are provided by residues Met94, Tyr123, His162, Ser184 to Gly186, Asn225 to Arg228, and Glu264. His268 serves as a coordination point for Zn(2+). Tyr291 is a binding site for substrate. His332 lines the Zn(2+) pocket. Cys408, Cys411, and Cys415 together coordinate [4Fe-4S] cluster.

This sequence belongs to the ThiC family. The cofactor is [4Fe-4S] cluster.

The enzyme catalyses 5-amino-1-(5-phospho-beta-D-ribosyl)imidazole + S-adenosyl-L-methionine = 4-amino-2-methyl-5-(phosphooxymethyl)pyrimidine + CO + 5'-deoxyadenosine + formate + L-methionine + 3 H(+). Its pathway is cofactor biosynthesis; thiamine diphosphate biosynthesis. Functionally, catalyzes the synthesis of the hydroxymethylpyrimidine phosphate (HMP-P) moiety of thiamine from aminoimidazole ribotide (AIR) in a radical S-adenosyl-L-methionine (SAM)-dependent reaction. The polypeptide is Phosphomethylpyrimidine synthase 2 (Methanosphaera stadtmanae (strain ATCC 43021 / DSM 3091 / JCM 11832 / MCB-3)).